A 314-amino-acid polypeptide reads, in one-letter code: Ribosomal protein L11 methyltransferase (314 aa).

S-adenosyl-L-methionine is bound by residues threonine 163, glycine 184, aspartate 206, and asparagine 248.

The protein belongs to the methyltransferase superfamily. PrmA family.

The protein localises to the cytoplasm. The enzyme catalyses L-lysyl-[protein] + 3 S-adenosyl-L-methionine = N(6),N(6),N(6)-trimethyl-L-lysyl-[protein] + 3 S-adenosyl-L-homocysteine + 3 H(+). Its function is as follows. Methylates ribosomal protein L11. This chain is Ribosomal protein L11 methyltransferase, found in Lactobacillus delbrueckii subsp. bulgaricus (strain ATCC BAA-365 / Lb-18).